A 422-amino-acid chain; its full sequence is Tk-subtilisin (422 aa).

The first 24 residues, 1 to 24, serve as a signal peptide directing secretion; sequence MKKSIALVLSIVLLAALFAVPASA. The propeptide occupies 25 to 106; that stretch reads GEQNTIRVIV…SWLGGGSTQP (82 aa). The Peptidase S8 domain maps to 111 to 417; the sequence is PWGIERVKAP…YGVVRAALAV (307 aa). Active-site charge relay system residues include D139, H177, and S348.

This sequence belongs to the peptidase S8 family. Monomer. The cofactor is Ca(2+).

The protein resides in the secreted. Its function is as follows. Has a broad substrate specificity with a slight preference to large hydrophobic amino acid residues at the P1 position. This chain is Tk-subtilisin, found in Thermococcus kodakarensis (strain ATCC BAA-918 / JCM 12380 / KOD1) (Pyrococcus kodakaraensis (strain KOD1)).